A 186-amino-acid polypeptide reads, in one-letter code: uncharacterized protein (186 aa).

A disordered region spans residues 156–186 (DTKELERTTQPPEHQKHHQEPREKRGMNKRD). Basic and acidic residues predominate over residues 173-186 (HQEPREKRGMNKRD).

This is an uncharacterized protein from Bacillus subtilis (strain 168).